A 300-amino-acid chain; its full sequence is Cell shape-determining protein MreC (300 aa).

The Cytoplasmic segment spans residues 1–17 (MARDRTRPEDFTRPLRR). A helical membrane pass occupies residues 18–38 (ILVGGLVLLLLGIFLIWRIDS). Residues 39–300 (PRVEQFRAAL…APAAVEGADG (262 aa)) lie on the Periplasmic side of the membrane. Positions 74–117 (QSYTRIYEQNQELRRELQQMKAWKEAALQLEQKNARLLDLNQVR) form a coiled coil. A disordered region spans residues 277-300 (SDPGKLVAEPPAPPAPAAVEGADG).

Belongs to the MreC family.

It is found in the cell inner membrane. Its function is as follows. Involved in formation and maintenance of cell shape. The sequence is that of Cell shape-determining protein MreC from Cereibacter sphaeroides (Rhodobacter sphaeroides).